The primary structure comprises 137 residues: ATP synthase epsilon chain, chloroplastic (137 aa).

Belongs to the ATPase epsilon chain family. In terms of assembly, F-type ATPases have 2 components, CF(1) - the catalytic core - and CF(0) - the membrane proton channel. CF(1) has five subunits: alpha(3), beta(3), gamma(1), delta(1), epsilon(1). CF(0) has three main subunits: a, b and c.

Its subcellular location is the plastid. It localises to the chloroplast thylakoid membrane. In terms of biological role, produces ATP from ADP in the presence of a proton gradient across the membrane. The protein is ATP synthase epsilon chain, chloroplastic of Medicago sativa (Alfalfa).